The sequence spans 774 residues: Acetyl-CoA decarbonylase/synthase complex subunit alpha (774 aa).

Positions 73, 76, 77, 79, 84, and 94 each coordinate [4Fe-4S] cluster. A CO-binding site is contributed by H117. 3 residues coordinate [Ni-4Fe-4S] cluster: H251, C279, and C318. 2 consecutive 4Fe-4S ferredoxin-type domains span residues L398 to A427 and F436 to T466. 8 residues coordinate [4Fe-4S] cluster: C408, C411, C414, C418, C446, C449, C452, and C456. [Ni-4Fe-4S] cluster-binding residues include C514, C543, and C578.

The protein belongs to the Ni-containing carbon monoxide dehydrogenase family. As to quaternary structure, heterotetramer of two alpha and two epsilon subunits. The ACDS complex is made up of alpha, epsilon, beta, gamma and delta subunits with a probable stoichiometry of (alpha(2)epsilon(2))(4)-beta(8)-(gamma(1)delta(1))(8). [4Fe-4S] cluster serves as cofactor. Requires [Ni-4Fe-4S] cluster as cofactor.

The enzyme catalyses CO + 2 oxidized [2Fe-2S]-[ferredoxin] + H2O = 2 reduced [2Fe-2S]-[ferredoxin] + CO2 + 2 H(+). Functionally, part of the ACDS complex that catalyzes the reversible cleavage of acetyl-CoA, allowing autotrophic growth from CO(2). The alpha-epsilon subcomponent functions as a carbon monoxide dehydrogenase. This is Acetyl-CoA decarbonylase/synthase complex subunit alpha from Methanocaldococcus jannaschii (strain ATCC 43067 / DSM 2661 / JAL-1 / JCM 10045 / NBRC 100440) (Methanococcus jannaschii).